A 1039-amino-acid polypeptide reads, in one-letter code: Protein male-specific lethal-1 (1039 aa).

Basic residues predominate over residues 1–13; that stretch reads MDKRFKWPPKKRA. Disordered stretches follow at residues 1–44 and 171–199; these read MDKR…HLHQ and RRKNQRRNDNDDDDDDPPLPPAAPQQKLI. S18 carries the post-translational modification Phosphoserine. Phosphoserine is present on S238. 4 disordered regions span residues 244-266, 358-454, 485-691, and 729-799; these read HAGAVTNQPASKRSESKGRGEFN, GQSV…GNQN, KKDK…EIDV, and IYPP…SSTT. The segment covering 255-266 has biased composition (basic and acidic residues); that stretch reads KRSESKGRGEFN. Residues 368-392 are compositionally biased toward acidic residues; that stretch reads EEDDDEDDEDDENSDKDDDSEEDDY. Basic and acidic residues predominate over residues 397-407; that stretch reads SDADVNARTEE. A compositionally biased stretch (polar residues) spans 431–445; that stretch reads AHSTPNHQQKSSTQA. S433 carries the phosphoserine modification. A Phosphothreonine modification is found at T434. Phosphoserine is present on residues S492 and S496. Basic and acidic residues-rich tracts occupy residues 504 to 515 and 523 to 570; these read PHQEDAIVDHNA and PKPD…DAPK. 2 stretches are compositionally biased toward polar residues: residues 581–592 and 609–625; these read TKTSSRESTLPK and NHQSTKTQTDPVKTQRL. Phosphoserine is present on S585. T659 carries the post-translational modification Phosphothreonine. Phosphoserine occurs at positions 682 and 684. T747 carries the post-translational modification Phosphothreonine. S749 is subject to Phosphoserine. Phosphothreonine is present on residues T750, T751, and T753. A compositionally biased stretch (polar residues) spans 759-768; sequence QHAVTSSMDQ. A phosphoserine mark is found at S764 and S765. At T788 the chain carries Phosphothreonine. S810 carries the post-translational modification Phosphoserine. Phosphothreonine occurs at positions 813 and 832. One can recognise a PEHE domain in the interval 865 to 983; it reads SLEIPKWRDV…EARDDFGVPW (119 aa). Phosphoserine occurs at positions 879 and 889. Residues 886–904 are interaction with mof HAT domain; it reads ELLSDATFERRHQKYVKDE. Positions 1011–1039 are disordered; sequence IPTTAAEARHQENHSSYVFPKRRKRQKNR. At T1014 the chain carries Phosphothreonine. S1025 carries the phosphoserine modification. A compositionally biased stretch (basic residues) spans 1030–1039; sequence PKRRKRQKNR. The short motif at 1032-1037 is the Nuclear localization signal element; sequence RRKRQK.

Belongs to the msl-1 family. As to quaternary structure, component of the male-specific lethal (MSL) histone acetyltransferase complex, composed of mof, mle, msl-1, msl-2 and msl-3 proteins, as well as roX1 and roX2 non-coding RNAs. Interacts (via PEHE domain) with mof (via HAT domain) and msl-3 (via MRG domain); both interactions are direct. Interacts with tamo via the nuclear localization signal. Component of a maternal MSL subcomplex composed of mof, msl-1 and msl-3. Post-translationally, phosphorylation at Ser-18, Thr743, Thr-747 and Thr-751 is required to promote phosphorylation of 'Ser-5' of the C-terminal heptapeptide repeat domain (CTD) of the largest RNA polymerase II subunit Polr2A. Phosphorylated by Cdk7 in vitro. In contrast, phosphorylation at Ser-18, Thr743, Thr-747 and Thr-751 does not affect its role in dosage compensation in males. In terms of processing, ubiquitinated by msl-2.

The protein localises to the nucleus. Its subcellular location is the chromosome. Functionally, component of the male-specific lethal (MSL) histone acetyltransferase complex, a multiprotein complex essential for elevating transcription of the single X chromosome in the male (X chromosome dosage compensation). The MSL complex specifically associates with the single X chromosome in males and mediates formation of H4K16ac, promoting a two-fold activation of X chromosome. In complex with msl-2, promotes ubiquitination of histone H2B. In addition to its role in dosage compensation in males, regulates the activity of gene promoters: acts together with Cdk7 to promote phosphorylation of 'Ser-5' of the C-terminal heptapeptide repeat domain (CTD) of the largest RNA polymerase II subunit Polr2A. In Drosophila melanogaster (Fruit fly), this protein is Protein male-specific lethal-1.